We begin with the raw amino-acid sequence, 2130 residues long: Bromodomain adjacent to zinc finger domain protein 2B (2130 aa).

7 disordered regions span residues methionine 1–alanine 42, leucine 82–glycine 118, glycine 151–proline 293, lysine 491–asparagine 518, valine 543–glycine 633, glutamate 756–glutamate 790, and arginine 944–glutamate 966. The segment covering threonine 8–serine 33 has biased composition (low complexity). Residues glutamate 183–serine 206 show a composition bias toward low complexity. Residues aspartate 207–glutamate 234 are compositionally biased toward acidic residues. Basic and acidic residues predominate over residues glycine 250 to threonine 270. Residues glutamine 272–histidine 283 are compositionally biased toward polar residues. The segment covering serine 284–proline 293 has biased composition (low complexity). The segment covering threonine 492–proline 505 has biased composition (polar residues). Positions valine 543–aspartate 554 are enriched in basic and acidic residues. Residues aspartate 555 to threonine 611 show a composition bias toward acidic residues. Residues threonine 623–glycine 633 are compositionally biased toward low complexity. The region spanning valine 687–proline 762 is the MBD domain. The segment covering glutamate 756–arginine 775 has biased composition (basic and acidic residues). A coiled-coil region spans residues alanine 797 to lysine 984. The DDT domain occupies glycine 1010 to leucine 1075. Disordered stretches follow at residues threonine 1186–valine 1265, serine 1431–serine 1454, valine 1499–methionine 1545, and histidine 1773–asparagine 1795. A compositionally biased stretch (acidic residues) spans serine 1220 to lysine 1244. Positions glutamate 1245 to valine 1254 are enriched in basic and acidic residues. Residues serine 1514–serine 1526 show a composition bias toward pro residues. The PHD-type zinc-finger motif lies at lysine 1895 to lysine 1945. Positions glutamine 1957 to lysine 2019 are disordered. Basic and acidic residues predominate over residues glycine 1991–glutamate 2002. The segment covering valine 2004–phenylalanine 2014 has biased composition (polar residues). Residues arginine 2022–isoleucine 2126 form the Bromo domain.

It belongs to the WAL family.

The protein resides in the nucleus. Its function is as follows. Regulatory subunit of the ATP-dependent BRF-1 and BRF-5 ISWI chromatin remodeling complexes, which form ordered nucleosome arrays on chromatin and facilitate access to DNA during DNA-templated processes such as DNA replication, transcription, and repair. Both complexes regulate the spacing of nucleosomes along the chromatin and have the ability to slide mononucleosomes to the center of a DNA template. The BRF-1 ISWI chromatin remodeling complex has a lower ATP hydrolysis rate than the BRF-5 ISWI chromatin remodeling complex. Chromatin reader protein. Represses the expression of mitochondrial function-related genes, perhaps by transcriptional regulation. The protein is Bromodomain adjacent to zinc finger domain protein 2B (BAZ2B) of Gallus gallus (Chicken).